We begin with the raw amino-acid sequence, 397 residues long: Decapping and exoribonuclease protein (397 aa).

Substrate contacts are provided by residues R58, E101, and 131-133 (WRG). Mg(2+) is bound at residue E192. C217 and E234 together coordinate substrate. Positions 234, 236, 253, and 254 each coordinate Mg(2+). Residues K255 and Q280 each contribute to the substrate site. Position 392 is a phosphothreonine (T392). A Phosphoserine modification is found at S394.

The protein belongs to the DXO/Dom3Z family. Mg(2+) is required as a cofactor.

Its subcellular location is the nucleus. It catalyses the reaction a 5'-end triphospho-ribonucleoside in mRNA + H2O = a 5'-end phospho-ribonucleoside in mRNA + diphosphate + H(+). The catalysed reaction is a 5'-end NAD(+)-phospho-ribonucleoside in mRNA + H2O = a 5'-end phospho-ribonucleoside in mRNA + NAD(+) + H(+). The enzyme catalyses a 5'-end NAD(+)-phospho-ribonucleoside in snoRNA + H2O = a 5'-end phospho-ribonucleoside in snoRNA + NAD(+) + H(+). It carries out the reaction a 5'-end (N(7)-methyl 5'-triphosphoguanosine)-ribonucleoside-ribonucleotide in mRNA + H2O = a (N(7)-methyl 5'-triphosphoguanosine)-nucleoside + a 5'-end phospho-ribonucleoside in mRNA + H(+). It catalyses the reaction a 5'-end FAD-phospho-ribonucleoside in mRNA + H2O = a 5'-end phospho-ribonucleoside in mRNA + FAD + H(+). The catalysed reaction is a 5'-end CoA-ribonucleoside in mRNA + H2O = 3'-dephospho-CoA + a 5'-end phospho-ribonucleoside in mRNA + H(+). Functionally, decapping enzyme for NAD-capped RNAs: specifically hydrolyzes the nicotinamide adenine dinucleotide (NAD) cap from a subset of RNAs by removing the entire NAD moiety from the 5'-end of an NAD-capped RNA. The NAD-cap is present at the 5'-end of some RNAs and snoRNAs. In contrast to the canonical 5'-end N7 methylguanosine (m7G) cap, the NAD cap promotes mRNA decay. Preferentially acts on NAD-capped transcripts in response to environmental stress. Also acts as a non-canonical decapping enzyme that removes the entire cap structure of m7G capped or incompletely capped RNAs and mediates their subsequent degradation. Specifically degrades pre-mRNAs with a defective 5'-end m7G cap and is part of a pre-mRNA capping quality control. Has decapping activity toward incomplete 5'-end m7G cap mRNAs such as unmethylated 5'-end-capped RNA (cap0), while it has no activity toward 2'-O-ribose methylated m7G cap (cap1). In contrast to canonical decapping enzymes DCP2 and NUDT16, which cleave the cap within the triphosphate linkage, the decapping activity releases the entire cap structure GpppN and a 5'-end monophosphate RNA. Also has 5'-3' exoribonuclease activities: The 5'-end monophosphate RNA is then degraded by the 5'-3' exoribonuclease activity, enabling this enzyme to decap and degrade incompletely capped mRNAs. Also possesses RNA 5'-pyrophosphohydrolase activity by hydrolyzing the 5'-end triphosphate to release pyrophosphates. Exhibits decapping activity towards FAD-capped RNAs. Exhibits decapping activity towards dpCoA-capped RNAs in vitro. The sequence is that of Decapping and exoribonuclease protein from Rattus norvegicus (Rat).